Reading from the N-terminus, the 367-residue chain is Cycloaraneosene synthase sdnA (367 aa).

Positions 1–24 (MSLYGLFTLATSYLPSVGGGAALA) are cleaved as a signal peptide. Residues Asp115, Asn260, and Ser264 each contribute to the Mg(2+) site. Residues 115-119 (DDQFD) carry the DDXXD motif motif. Residue Asn276 is glycosylated (N-linked (GlcNAc...) asparagine).

Belongs to the terpene synthase family. The cofactor is Mg(2+).

It carries out the reaction (2E,6E,10E)-geranylgeranyl diphosphate = cycloaraneosene + diphosphate. Its pathway is antibiotic biosynthesis. In terms of biological role, cycloaraneosene synthase; part of the gene cluster that mediates the biosynthesis of sordarin and hypoxysordarin, glycoside antibiotics with a unique tetracyclic diterpene aglycone structure. First, the geranylgeranyl diphosphate synthase sdnC constructs GGDP from farnesyl diphosphate and isopentenyl diphosphate. The diterpene cyclase sdnA then catalyzes the cyclization of GGDP to afford cycloaraneosene. Cycloaraneosene is then hydroxylated four times by the putative cytochrome P450 monooxygenases sdnB, sdnE, sdnF and sdnH to give a hydroxylated cycloaraneosene derivative such as cycloaraneosene-8,9,13,19-tetraol. Although the order of the hydroxylations is unclear, at least C8, C9 and C13 of the cycloaraneosene skeleton are hydroxylated before the sordaricin formation. Dehydration of the 13-hydroxy group of the hydroxylated cycloaraneosene derivative might be catalyzed by an unassigned hypothetical protein such as sdnG and sdnP to construct the cyclopentadiene moiety. The FAD-dependent oxidoreductase sdnN is proposed to catalyze the oxidation at C9 of the hydroxylated cycloaraneosene derivative and also catalyze the Baeyer-Villiger oxidation to give the lactone intermediate. The presumed lactone intermediate would be hydrolyzed to give an acrolein moiety and a carboxylate moiety. Then, [4+2]cycloaddition would occur between the acrolein moiety and the cyclopentadiene moiety to give sordaricin. SdnN might also be involved in the [4+2]cycloaddition after the hypothesized oxidation to accommodate the oxidized product and prompt the [4+2]cycloaddition. GDP-6-deoxy-D-altrose may be biosynthesized from GDP-D-mannose by the putative GDP-mannose-4,6-dehydratase sdnI and the short-chain dehydrogenase sdnK. The glycosyltransferase sdnJ catalyzes the attachment of 6-deoxy-D-altrose onto the 19-hydroxy group of sordaricin to give 4'-O-demethylsordarin. The methyltransferase sdnD would complete the biosynthesis of sordarin. Sordarin can be further modified into hypoxysordarin. The unique acyl chain at the 3'-hydroxy group of hypoxysordarin would be constructed by an iterative type I PKS sdnO and the trans-acting polyketide methyltransferase sdnL. SdnL would be responsible for the introduction of an alpha-methyl group of the polyketide chain. Alternatively, the beta-lactamase-like protein sdnR might be responsible for the cleavage and transfer of the polyketide chain from the PKS sdnO to sordarin. Two putative cytochrome P450 monooxygenases, sdnQ and sdnT, might catalyze the epoxidations of the polyketide chain to complete the biosynthesis of hypoxysordarin. Transcriptional regulators sdnM and sdnS are presumably encoded for the transcriptional regulation of the expression of the sdn gene cluster. This Sordaria araneosa (Pleurage araneosa) protein is Cycloaraneosene synthase sdnA.